The primary structure comprises 452 residues: Probable glycine dehydrogenase (decarboxylating) subunit 1 (452 aa).

It belongs to the GcvP family. N-terminal subunit subfamily. As to quaternary structure, the glycine cleavage system is composed of four proteins: P, T, L and H. In this organism, the P 'protein' is a heterodimer of two subunits.

It carries out the reaction N(6)-[(R)-lipoyl]-L-lysyl-[glycine-cleavage complex H protein] + glycine + H(+) = N(6)-[(R)-S(8)-aminomethyldihydrolipoyl]-L-lysyl-[glycine-cleavage complex H protein] + CO2. In terms of biological role, the glycine cleavage system catalyzes the degradation of glycine. The P protein binds the alpha-amino group of glycine through its pyridoxal phosphate cofactor; CO(2) is released and the remaining methylamine moiety is then transferred to the lipoamide cofactor of the H protein. This Nitrosospira multiformis (strain ATCC 25196 / NCIMB 11849 / C 71) protein is Probable glycine dehydrogenase (decarboxylating) subunit 1.